The primary structure comprises 300 residues: Protoheme IX farnesyltransferase (300 aa).

9 helical membrane-spanning segments follow: residues 21 to 43 (PRVV…RGVP), 45 to 65 (PLSV…AGAF), 94 to 114 (ASLI…LLFV), 117 to 137 (LSAL…SIVL), 145 to 167 (IVWG…TGSI), 171 to 193 (AIVL…SIHY), 213 to 233 (LVVL…LLLI), 235 to 255 (VAHM…WFVY), and 272 to 292 (AMHI…SVGI).

This sequence belongs to the UbiA prenyltransferase family. Protoheme IX farnesyltransferase subfamily.

Its subcellular location is the cell membrane. The enzyme catalyses heme b + (2E,6E)-farnesyl diphosphate + H2O = Fe(II)-heme o + diphosphate. The protein operates within porphyrin-containing compound metabolism; heme O biosynthesis; heme O from protoheme: step 1/1. Its function is as follows. Converts heme B (protoheme IX) to heme O by substitution of the vinyl group on carbon 2 of heme B porphyrin ring with a hydroxyethyl farnesyl side group. This is Protoheme IX farnesyltransferase from Tropheryma whipplei (strain TW08/27) (Whipple's bacillus).